The primary structure comprises 285 residues: Pyrroline-5-carboxylate reductase (285 aa).

The protein belongs to the pyrroline-5-carboxylate reductase family. In terms of assembly, homotetramer.

It carries out the reaction L-proline + NADP(+) = (S)-1-pyrroline-5-carboxylate + NADPH + 2 H(+). The catalysed reaction is L-proline + NAD(+) = (S)-1-pyrroline-5-carboxylate + NADH + 2 H(+). The protein operates within amino-acid biosynthesis; L-proline biosynthesis; L-proline from L-glutamate 5-semialdehyde: step 1/1. In Kluyveromyces lactis (strain ATCC 8585 / CBS 2359 / DSM 70799 / NBRC 1267 / NRRL Y-1140 / WM37) (Yeast), this protein is Pyrroline-5-carboxylate reductase.